Here is a 206-residue protein sequence, read N- to C-terminus: Nucleoside triphosphate pyrophosphatase (206 aa).

Catalysis depends on D76, which acts as the Proton acceptor.

This sequence belongs to the Maf family. It depends on a divalent metal cation as a cofactor.

Its subcellular location is the cytoplasm. It carries out the reaction a ribonucleoside 5'-triphosphate + H2O = a ribonucleoside 5'-phosphate + diphosphate + H(+). The catalysed reaction is a 2'-deoxyribonucleoside 5'-triphosphate + H2O = a 2'-deoxyribonucleoside 5'-phosphate + diphosphate + H(+). Nucleoside triphosphate pyrophosphatase. May have a dual role in cell division arrest and in preventing the incorporation of modified nucleotides into cellular nucleic acids. The protein is Nucleoside triphosphate pyrophosphatase of Streptomyces avermitilis (strain ATCC 31267 / DSM 46492 / JCM 5070 / NBRC 14893 / NCIMB 12804 / NRRL 8165 / MA-4680).